Consider the following 31-residue polypeptide: Photosystem II reaction center protein T (31 aa).

The chain crosses the membrane as a helical span at residues 3-23; sequence AFTYTLLMTLGVVTLFFAVAF.

This sequence belongs to the PsbT family. PSII is composed of 1 copy each of membrane proteins PsbA, PsbB, PsbC, PsbD, PsbE, PsbF, PsbH, PsbI, PsbJ, PsbK, PsbL, PsbM, PsbT, PsbX, PsbY, Psb30/Ycf12, peripheral proteins PsbO, CyanoQ (PsbQ), PsbU, PsbV and a large number of cofactors. It forms dimeric complexes.

It is found in the cellular thylakoid membrane. Its function is as follows. Found at the monomer-monomer interface of the photosystem II (PS II) dimer, plays a role in assembly and dimerization of PSII. PSII is a light-driven water plastoquinone oxidoreductase, using light energy to abstract electrons from H(2)O, generating a proton gradient subsequently used for ATP formation. The sequence is that of Photosystem II reaction center protein T from Prochlorococcus marinus (strain SARG / CCMP1375 / SS120).